Consider the following 227-residue polypeptide: Ion-translocating oxidoreductase complex subunit E (227 aa).

A run of 6 helical transmembrane segments spans residues 18-38 (ALVQ…VTNA), 39-59 (LGLG…VSLV), 69-89 (IPVF…LMNA), 93-113 (GLYL…IIIG), 125-145 (LPAV…LVLL), and 182-202 (HFLL…LIAL).

The protein belongs to the NqrDE/RnfAE family. As to quaternary structure, the complex is composed of six subunits: RnfA, RnfB, RnfC, RnfD, RnfE and RnfG.

Its subcellular location is the cell inner membrane. In terms of biological role, part of a membrane-bound complex that couples electron transfer with translocation of ions across the membrane. The sequence is that of Ion-translocating oxidoreductase complex subunit E from Aliivibrio fischeri (strain ATCC 700601 / ES114) (Vibrio fischeri).